Consider the following 368-residue polypeptide: Agmatine deiminase (368 aa).

C357 serves as the catalytic Amidino-cysteine intermediate.

This sequence belongs to the agmatine deiminase family. As to quaternary structure, homodimer.

The enzyme catalyses agmatine + H2O = N-carbamoylputrescine + NH4(+). The protein operates within amine and polyamine biosynthesis; putrescine biosynthesis via agmatine pathway; N-carbamoylputrescine from agmatine: step 1/1. Mediates the hydrolysis of agmatine into N-carbamoylputrescine in the arginine decarboxylase (ADC) pathway of putrescine biosynthesis, a basic polyamine. This is Agmatine deiminase from Pseudomonas aeruginosa (strain LESB58).